The sequence spans 244 residues: uncharacterized protein (244 aa).

Over residues 1 to 11 (MSRRSRSRSRS) the composition is skewed to basic residues. 2 disordered regions span residues 1-104 (MSRR…TLNE) and 213-244 (ARQK…KFGK). Residues 12-31 (PKRDREERKRREDRDRDRER) show a composition bias toward basic and acidic residues. Residues 32 to 46 (KRDRKDRERKRRHRS) are compositionally biased toward basic residues. Over residues 63–75 (FREERRRRERNES) the composition is skewed to basic and acidic residues. Pro residues predominate over residues 77–89 (KLPPPPPPPPSDP). Residues 213 to 223 (ARQKSDMKKNE) show a composition bias toward basic and acidic residues. Over residues 224–234 (QQAILNKSGNS) the composition is skewed to polar residues.

This is an uncharacterized protein from Caenorhabditis elegans.